The following is a 1476-amino-acid chain: Glucosyltransferase-I (1476 aa).

An N-terminal signal peptide occupies residues 1–34 (MDKKVRYKLRKVKKRWVTVSVASAVMTLTTLSGG). Disordered regions lie at residues 42-89 (ESKS…ISSS) and 102-141 (PYTV…TEAD). 2 stretches are compositionally biased toward polar residues: residues 43 to 81 (SKSQ…QTNH) and 102 to 139 (PYTV…QTTE). 2 Cell wall-binding repeats span residues 159–178 (LPNV…NGKV) and 179–199 (RTNF…TGAY). Residues 200 to 1051 (TDTSIDTVNK…NTYFNISDNK (852 aa)) are catalytic; approximate. Cell wall-binding repeat units lie at residues 1087 to 1106 (KNTF…NGYM), 1107 to 1126 (VTGA…NGLQ), 1170 to 1189 (SVGL…MGYQ), 1214 to 1234 (RNRF…DGAA), 1235 to 1254 (VTGS…NGVQ), 1279 to 1299 (RNRF…NGYA), 1300 to 1319 (VTGA…NGVQ), 1344 to 1364 (RNRF…NGYA), 1365 to 1384 (VTGA…NGVQ), 1409 to 1429 (RNRF…NGYA), and 1430 to 1449 (VTGA…NGVQ).

It belongs to the glycosyl hydrolase 70 family.

It localises to the secreted. It carries out the reaction [(1-&gt;6)-alpha-D-glucosyl](n) + sucrose = [(1-&gt;6)-alpha-D-glucosyl](n+1) + D-fructose. Its function is as follows. Production of extracellular glucans, that are thought to play a key role in the development of the dental plaque because of their ability to adhere to smooth surfaces and mediate the aggregation of bacterial cells and food debris. In Streptococcus mutans serotype c (strain ATCC 700610 / UA159), this protein is Glucosyltransferase-I (gtfB).